The chain runs to 957 residues: Protein translocase subunit SecA (957 aa).

Residues glutamine 86, 104–108, and aspartate 494 contribute to the ATP site; that span reads GEGKT. Low complexity predominate over residues 929 to 947; the sequence is SRPAPAPTAAASPDPSSAS. Residues 929–957 form a disordered region; the sequence is SRPAPAPTAAASPDPSSASGVVEADFTEE.

The protein belongs to the SecA family. In terms of assembly, monomer and homodimer. Part of the essential Sec protein translocation apparatus which comprises SecA, SecYEG and auxiliary proteins SecDF. Other proteins may also be involved.

It localises to the cell inner membrane. It is found in the cellular thylakoid membrane. The protein resides in the cytoplasm. It carries out the reaction ATP + H2O + cellular proteinSide 1 = ADP + phosphate + cellular proteinSide 2.. In terms of biological role, part of the Sec protein translocase complex. Interacts with the SecYEG preprotein conducting channel. Has a central role in coupling the hydrolysis of ATP to the transfer of proteins into and across the cell membrane, serving as an ATP-driven molecular motor driving the stepwise translocation of polypeptide chains across the membrane. Its function is as follows. Probably participates in protein translocation into and across both the cytoplasmic and thylakoid membranes in cyanobacterial cells. The protein is Protein translocase subunit SecA of Synechococcus sp. (strain JA-2-3B'a(2-13)) (Cyanobacteria bacterium Yellowstone B-Prime).